The following is a 96-amino-acid chain: 2Fe-2S ferredoxin-5 (96 aa).

Residues P2–P96 form the 2Fe-2S ferredoxin-type domain. [2Fe-2S] cluster is bound by residues C36, C42, C45, and C81.

It belongs to the adrenodoxin/putidaredoxin family. The cofactor is [2Fe-2S] cluster.

Functionally, may be involved in the assembly of iron-sulfur clusters (Isc-Fd). In Aquifex aeolicus (strain VF5), this protein is 2Fe-2S ferredoxin-5 (fdx5).